The primary structure comprises 160 residues: E3 ubiquitin ligase complex SCF subunit sconC (160 aa).

An interaction with the F-box domain of F-box proteins region spans residues 101–160 (ILAANYLDIKALLDVGCKTVANMIKGKSPEEIRKTFNIQNDFTPEEEDQIRRENEWAEDR).

The protein belongs to the SKP1 family. Component of the SCF (SKP1-CUL1-F-box protein) E3 ubiquitin ligase complexes.

It participates in protein modification; protein ubiquitination. In terms of biological role, essential component of the SCF (SKP1-CUL1-F-box protein) E3 ubiquitin ligase complexes, which mediate the ubiquitination and subsequent proteasomal degradation of target proteins. Controls sulfur metabolite repression, probably by mediating the inactivation or degradation of the metR transcription factor. This Talaromyces stipitatus (strain ATCC 10500 / CBS 375.48 / QM 6759 / NRRL 1006) (Penicillium stipitatum) protein is E3 ubiquitin ligase complex SCF subunit sconC (sconC).